A 421-amino-acid chain; its full sequence is UDP-N-acetylglucosamine 1-carboxyvinyltransferase 2 (421 aa).

22–23 contributes to the phosphoenolpyruvate binding site; the sequence is KN. Arg-95 is a UDP-N-acetyl-alpha-D-glucosamine binding site. Catalysis depends on Cys-119, which acts as the Proton donor. 2-(S-cysteinyl)pyruvic acid O-phosphothioketal is present on Cys-119. UDP-N-acetyl-alpha-D-glucosamine-binding positions include 124-128, Asp-308, and Val-330; that span reads RPIEQ.

It belongs to the EPSP synthase family. MurA subfamily.

Its subcellular location is the cytoplasm. The enzyme catalyses phosphoenolpyruvate + UDP-N-acetyl-alpha-D-glucosamine = UDP-N-acetyl-3-O-(1-carboxyvinyl)-alpha-D-glucosamine + phosphate. The protein operates within cell wall biogenesis; peptidoglycan biosynthesis. Cell wall formation. Adds enolpyruvyl to UDP-N-acetylglucosamine. In Staphylococcus haemolyticus (strain JCSC1435), this protein is UDP-N-acetylglucosamine 1-carboxyvinyltransferase 2.